A 368-amino-acid polypeptide reads, in one-letter code: Glutaminyl-peptide cyclotransferase (368 aa).

Residues 1 to 23 (MARERRDSKAATFFCLAWALCLA) form the signal peptide. N-linked (GlcNAc...) asparagine glycans are attached at residues asparagine 53 and asparagine 65. The cysteines at positions 143 and 169 are disulfide-linked. Aspartate 164 provides a ligand contact to Zn(2+). Residue glutamate 207 is the Proton acceptor of the active site. Residue glutamate 208 coordinates Zn(2+). The active-site Proton acceptor is the aspartate 254. Asparagine 292 carries an N-linked (GlcNAc...) asparagine glycan. Histidine 336 serves as a coordination point for Zn(2+). The N-linked (GlcNAc...) asparagine glycan is linked to asparagine 352.

Belongs to the glutaminyl-peptide cyclotransferase family. As to expression, expressed by the venom gland.

It localises to the secreted. The enzyme catalyses N-terminal L-glutaminyl-[peptide] = N-terminal 5-oxo-L-prolyl-[peptide] + NH4(+). Its function is as follows. Responsible for the biosynthesis of pyroglutamyl peptides. Has a bias against acidic and tryptophan residues adjacent to the N-terminal glutaminyl residue and a lack of importance of chain length after the second residue. Also catalyzes N-terminal pyroglutamate formation. This chain is Glutaminyl-peptide cyclotransferase (QPCT), found in Bothrops jararaca (Jararaca).